Here is a 444-residue protein sequence, read N- to C-terminus: F-box/FBD/LRR-repeat protein At5g53840 (444 aa).

One can recognise an F-box domain in the interval 17–63 (EERLSQLPDHLICVILSHLSTKDAVRTSILSTRWRNLWQLVPVLDFD). LRR repeat units lie at residues 103–123 (YYLT…IDIS), 124–150 (VFTC…KLSR), 151–171 (VTMV…DLDF), 172–197 (VNFT…TIVK), 199–224 (SEDN…RFDR), 226–252 (NGLV…EFIN), 273–299 (NRSM…TIKD), 300–321 (IFHY…LSAV), 322–347 (CSIS…SLKL), 369–396 (VSSL…YFLE), and 398–423 (STIL…HIRQ). Residues 356–408 (EEVMSSTVPPPCLVSSLKFVKLESQLLGCGTELKVARYFLENSTILEKLTLKI) enclose the FBD domain.

The chain is F-box/FBD/LRR-repeat protein At5g53840 from Arabidopsis thaliana (Mouse-ear cress).